A 470-amino-acid polypeptide reads, in one-letter code: Uronate isomerase (470 aa).

This sequence belongs to the metallo-dependent hydrolases superfamily. Uronate isomerase family.

The catalysed reaction is D-glucuronate = D-fructuronate. It carries out the reaction aldehydo-D-galacturonate = keto-D-tagaturonate. It functions in the pathway carbohydrate metabolism; pentose and glucuronate interconversion. The protein is Uronate isomerase of Sphingopyxis alaskensis (strain DSM 13593 / LMG 18877 / RB2256) (Sphingomonas alaskensis).